We begin with the raw amino-acid sequence, 202 residues long: MSRYRGPRLRVTRRLGELPGLTRKASKKSNPPGQHGQARRKRSEYAIRLEEKQKLRFNYGVSERQLVRYVKKARAQEGSTGTNLLRLLENRLDNVCFRLGFGGTIPGSRQLVNHGHVTINGKVLDIAGYQCKPGDVISIKENKASKKLVEGNIEFPGLANVPPHIELDKPKLTGKINGKCDREWVALEINELLVVEYYSRKV.

A compositionally biased stretch (basic residues) spans 1–13 (MSRYRGPRLRVTR). Residues 1 to 42 (MSRYRGPRLRVTRRLGELPGLTRKASKKSNPPGQHGQARRKR) form a disordered region. One can recognise an S4 RNA-binding domain in the interval 90 to 152 (NRLDNVCFRL…KASKKLVEGN (63 aa)).

This sequence belongs to the universal ribosomal protein uS4 family. Part of the 30S ribosomal subunit. Contacts protein S5. The interaction surface between S4 and S5 is involved in control of translational fidelity.

Functionally, one of the primary rRNA binding proteins, it binds directly to 16S rRNA where it nucleates assembly of the body of the 30S subunit. Its function is as follows. With S5 and S12 plays an important role in translational accuracy. This is Small ribosomal subunit protein uS4 from Prochlorococcus marinus subsp. pastoris (strain CCMP1986 / NIES-2087 / MED4).